The following is a 356-amino-acid chain: Glutamine synthetase cytosolic isozyme 2 (356 aa).

The 81-residue stretch at 19-99 folds into the GS beta-grasp domain; sequence IIAEYIWIGG…VMCDTYTPAG (81 aa). Positions 106–356 constitute a GS catalytic domain; sequence KRHNAAKIFS…IAESTILWKP (251 aa).

This sequence belongs to the glutamine synthetase family. Homooctamer.

It localises to the cytoplasm. The catalysed reaction is L-glutamate + NH4(+) + ATP = L-glutamine + ADP + phosphate + H(+). In Vitis vinifera (Grape), this protein is Glutamine synthetase cytosolic isozyme 2 (GS1-2).